The primary structure comprises 327 residues: Phenylalanine--tRNA ligase alpha subunit (327 aa).

Residue glutamate 252 coordinates Mg(2+).

The protein belongs to the class-II aminoacyl-tRNA synthetase family. Phe-tRNA synthetase alpha subunit type 1 subfamily. Tetramer of two alpha and two beta subunits. The cofactor is Mg(2+).

It localises to the cytoplasm. It catalyses the reaction tRNA(Phe) + L-phenylalanine + ATP = L-phenylalanyl-tRNA(Phe) + AMP + diphosphate + H(+). This Klebsiella pneumoniae (strain 342) protein is Phenylalanine--tRNA ligase alpha subunit.